The following is a 347-amino-acid chain: MLVLGIESSCDETGVALVDAGGSEVPRLLSHALFSQIQMHQAYGGVVPELASRDHIRRVLPLTRQVMAQAGRSLAQVDVVAYTRGPGLAGALLVGAGVACALAAALGKPVMGVHHLEGHLLSPFLSADPPVFPFVALLVSGGHTQLMRVDRVGSYELLGETIDDAAGEAFDKSAKLMGLPYPGGPHLADLARQGDGTAFKLPRPLLHSGDLDFSFAGLKTAVLTQAKKLGPELENRKADLAAATQAAIVDVLVKKSLAAMAQTGLKRLVVAGGVGANALLRSQLNAACQQRGIRVHYPELHLCTDNGAMIALAAGMRLQAGLETLQRGYTFDVKPRWSLTPTVARSA.

Histidine 115 and histidine 119 together coordinate Fe cation. Substrate contacts are provided by residues leucine 138–glycine 142, aspartate 171, glycine 184, and asparagine 277. Fe cation is bound at residue aspartate 305.

Belongs to the KAE1 / TsaD family. Fe(2+) is required as a cofactor.

It is found in the cytoplasm. The enzyme catalyses L-threonylcarbamoyladenylate + adenosine(37) in tRNA = N(6)-L-threonylcarbamoyladenosine(37) in tRNA + AMP + H(+). Required for the formation of a threonylcarbamoyl group on adenosine at position 37 (t(6)A37) in tRNAs that read codons beginning with adenine. Is involved in the transfer of the threonylcarbamoyl moiety of threonylcarbamoyl-AMP (TC-AMP) to the N6 group of A37, together with TsaE and TsaB. TsaD likely plays a direct catalytic role in this reaction. The sequence is that of tRNA N6-adenosine threonylcarbamoyltransferase from Polaromonas sp. (strain JS666 / ATCC BAA-500).